The chain runs to 303 residues: Acidic endochitinase WIN6.2B (303 aa).

An N-terminal signal peptide occupies residues 1–21 (MSVWAFAFFSLFLSLSVRGSA). The region spanning 22-62 (EQCGQQAGDALCPGGLCCSSYGWCGTTADYCGDGCQSQCDG) is the Chitin-binding type-1 domain. 4 cysteine pairs are disulfide-bonded: cysteine 24–cysteine 39, cysteine 33–cysteine 45, cysteine 38–cysteine 52, and cysteine 56–cysteine 60. Residues 82–303 (DGYLSDIIPE…YGLLGLKDTM (222 aa)) form a chitinase region. Glutamate 150 acts as the Proton donor in catalysis. A disulfide bridge links cysteine 253 with cysteine 286.

The protein belongs to the glycosyl hydrolase 19 family. Chitinase class I subfamily.

It catalyses the reaction Random endo-hydrolysis of N-acetyl-beta-D-glucosaminide (1-&gt;4)-beta-linkages in chitin and chitodextrins.. Defense against chitin-containing fungal pathogens. In Populus trichocarpa (Western balsam poplar), this protein is Acidic endochitinase WIN6.2B.